The primary structure comprises 803 residues: Translation initiation factor IF-2 (803 aa).

The span at 65–75 shows a compositional bias: basic and acidic residues; it reads PDKVEEKKEHT. The tract at residues 65–186 is disordered; the sequence is PDKVEEKKEH…PKSRKSKTLK (122 aa). A compositionally biased stretch (basic residues) spans 175–185; the sequence is NKPKSRKSKTL. In terms of domain architecture, tr-type G spans 300–468; it reads IRPPVVTIMG…ILLTADAALE (169 aa). Residues 309–316 form a G1 region; that stretch reads GHVDHGKT. 309–316 contributes to the GTP binding site; it reads GHVDHGKT. Positions 334 to 338 are G2; sequence GITQH. The segment at 355–358 is G3; sequence DTPG. GTP is bound by residues 355-359 and 409-412; these read DTPGH and NKID. A G4 region spans residues 409–412; sequence NKID. Residues 445–447 form a G5 region; that stretch reads SAK.

This sequence belongs to the TRAFAC class translation factor GTPase superfamily. Classic translation factor GTPase family. IF-2 subfamily.

Its subcellular location is the cytoplasm. Functionally, one of the essential components for the initiation of protein synthesis. Protects formylmethionyl-tRNA from spontaneous hydrolysis and promotes its binding to the 30S ribosomal subunits. Also involved in the hydrolysis of GTP during the formation of the 70S ribosomal complex. In Tropheryma whipplei (strain TW08/27) (Whipple's bacillus), this protein is Translation initiation factor IF-2.